The following is a 261-amino-acid chain: Cytochrome c oxidase subunit 3 (261 aa).

The Mitochondrial matrix segment spans residues 1-15; it reads MTHQTHAYHMVNPSP. A helical transmembrane segment spans residues 16 to 34; the sequence is WPLTGALSALLMTSGLIMW. At 35 to 40 the chain is on the mitochondrial intermembrane side; the sequence is FHFNSM. The chain crosses the membrane as a helical span at residues 41 to 66; that stretch reads TLLMLGLTTNMLTMYQWWRDIIREST. The Mitochondrial matrix segment spans residues 67-72; the sequence is FQGHHT. Residues 73-105 form a helical membrane-spanning segment; it reads SAVQKGLRYGMILFIISEVLFFTGFFWAFYHSS. Topologically, residues 106–128 are mitochondrial intermembrane; it reads LAPTPELGGCWPPTGIHPLNPLE. A helical transmembrane segment spans residues 129–152; it reads VPLLNTSVLLASGVSITWAHHSLM. Topologically, residues 153 to 155 are mitochondrial matrix; sequence EGN. The helical transmembrane segment at 156-183 threads the bilayer; the sequence is RNHMLQALFITIALGVYFTLLQASEYYE. The Mitochondrial intermembrane portion of the chain corresponds to 184–190; that stretch reads APFTISD. The helical transmembrane segment at 191–223 threads the bilayer; it reads GVYGSTFFVATGFHGLHVIIGSTFLIVCFFRQL. At 224-232 the chain is on the mitochondrial matrix side; sequence KFHFTSTHH. Residues 233-256 traverse the membrane as a helical segment; sequence FGFEAAAWYWHFVDVVWLFLYVSI. At 257–261 the chain is on the mitochondrial intermembrane side; it reads YWWGS.

Belongs to the cytochrome c oxidase subunit 3 family. Component of the cytochrome c oxidase (complex IV, CIV), a multisubunit enzyme composed of 14 subunits. The complex is composed of a catalytic core of 3 subunits MT-CO1, MT-CO2 and MT-CO3, encoded in the mitochondrial DNA, and 11 supernumerary subunits COX4I, COX5A, COX5B, COX6A, COX6B, COX6C, COX7A, COX7B, COX7C, COX8 and NDUFA4, which are encoded in the nuclear genome. The complex exists as a monomer or a dimer and forms supercomplexes (SCs) in the inner mitochondrial membrane with NADH-ubiquinone oxidoreductase (complex I, CI) and ubiquinol-cytochrome c oxidoreductase (cytochrome b-c1 complex, complex III, CIII), resulting in different assemblies (supercomplex SCI(1)III(2)IV(1) and megacomplex MCI(2)III(2)IV(2)).

The protein resides in the mitochondrion inner membrane. It carries out the reaction 4 Fe(II)-[cytochrome c] + O2 + 8 H(+)(in) = 4 Fe(III)-[cytochrome c] + 2 H2O + 4 H(+)(out). Its function is as follows. Component of the cytochrome c oxidase, the last enzyme in the mitochondrial electron transport chain which drives oxidative phosphorylation. The respiratory chain contains 3 multisubunit complexes succinate dehydrogenase (complex II, CII), ubiquinol-cytochrome c oxidoreductase (cytochrome b-c1 complex, complex III, CIII) and cytochrome c oxidase (complex IV, CIV), that cooperate to transfer electrons derived from NADH and succinate to molecular oxygen, creating an electrochemical gradient over the inner membrane that drives transmembrane transport and the ATP synthase. Cytochrome c oxidase is the component of the respiratory chain that catalyzes the reduction of oxygen to water. Electrons originating from reduced cytochrome c in the intermembrane space (IMS) are transferred via the dinuclear copper A center (CU(A)) of subunit 2 and heme A of subunit 1 to the active site in subunit 1, a binuclear center (BNC) formed by heme A3 and copper B (CU(B)). The BNC reduces molecular oxygen to 2 water molecules using 4 electrons from cytochrome c in the IMS and 4 protons from the mitochondrial matrix. In Damaliscus lunatus (Tsessebe), this protein is Cytochrome c oxidase subunit 3 (MT-CO3).